Reading from the N-terminus, the 326-residue chain is MKITIFGAGAIGGYLAAKLAIAGRTDLSIVARGAHLEAIQANGLRLIEDGEESMAPVRAAAKAEELGAQDYVVLALKAHSLTPALDQIAPLLGDHTSVVTMQNGVPWWYFHGVGGPLEGTRLNAVDPGGAIWQRIGPQRVIGSVVYPAVEVDAPGLIRHVEGKRFSLGEPSGERSERVTLLAEEMVKAGLQAPVRDDIRSEIWVKLWGNLSFNPISALTGSTLAAIVADEGTRALARTMMLEAQAIGESLGVRFPIGVDRRIKGAGDVGEHKTSMLQDLERGRPMEIDALVSAVQELGRLVDKPTPTIDAVLALVRRLAVERGCYS.

Residues 7–12 (GAGAIG) and N103 each bind NADP(+). N103 is a binding site for substrate. The active-site Proton donor is K205. Residues N209, N213, and S274 each coordinate substrate. E286 contributes to the NADP(+) binding site.

The protein belongs to the ketopantoate reductase family.

Its subcellular location is the cytoplasm. It catalyses the reaction (R)-pantoate + NADP(+) = 2-dehydropantoate + NADPH + H(+). It functions in the pathway cofactor biosynthesis; (R)-pantothenate biosynthesis; (R)-pantoate from 3-methyl-2-oxobutanoate: step 2/2. Its function is as follows. Catalyzes the NADPH-dependent reduction of ketopantoate into pantoic acid. The polypeptide is 2-dehydropantoate 2-reductase (Mesorhizobium japonicum (strain LMG 29417 / CECT 9101 / MAFF 303099) (Mesorhizobium loti (strain MAFF 303099))).